Consider the following 466-residue polypeptide: Ceramide glucosyltransferase 1 (466 aa).

Residues 70–90 (LALSGCIFVSVLYLVHIIAFF) form a helical membrane-spanning segment. Asp148 is a short sequence motif (D1). A short sequence motif (D2) is located at residue Asp200. Position 294 (Asp294) is a short sequence motif, D3. The active-site Proton acceptor is the Asp294. Positions 330 to 334 (RIGRW) match the (Q/R)XXRW motif. 2 helical membrane passes run 354-374 (CVTS…YSVY) and 403-423 (TPFL…FIFI).

It belongs to the glycosyltransferase 2 family. In terms of tissue distribution, expressed in excretory canals, pharyngeal intestinal valve, intestine and intestinal rectal valve.

The protein localises to the membrane. The enzyme catalyses an N-acylsphing-4-enine + UDP-alpha-D-glucose = a beta-D-glucosyl-(1&lt;-&gt;1')-N-acylsphing-4-enine + UDP + H(+). The catalysed reaction is an N-acyl-15-methylhexadecasphing-4-enine + UDP-alpha-D-glucose = an N-acyl-1-beta-D-glucosyl-15-methylhexadecasphing-4-enine + UDP + H(+). It functions in the pathway lipid metabolism; sphingolipid metabolism. In terms of biological role, catalyzes the first glycosylation step in glycosphingolipid biosynthesis, the transfer of glucose to ceramide to produce glucosylceramides (GlcCer). GlcCer are known to contribute to the physical properties and physiological functions of membranes and may regulate signal transduction. Only branched-chain sphingoid bases like 15-methylhexadecasphing-4-enine are used for generating complex sphingolipids in Caenorhabditis elegans. Together with cgt-3, plays a role in the trafficking of proteins such as mig-14 to the cell membrane in intestinal cells. In Caenorhabditis elegans, this protein is Ceramide glucosyltransferase 1.